The primary structure comprises 381 residues: E3 ubiquitin-protein ligase RNF133 (381 aa).

One can recognise a PA domain in the interval 65–167 (SSILKRVAGV…VKGMEILHLI (103 aa)). Residues 186 to 208 (WLNHYFVSFMIVTTATLAYFTFY) form a helical membrane-spanning segment. Residues 256–297 (CVICFEAYKPNEIVRILTCKHFFHKNCIDPWILAHGTCPMCK) form an RING-type; atypical zinc finger. The interval 340–381 (LPPARTSSKVTHVQEHPTSVNVGSQPPEAEETGHPSFGQHDL) is disordered. Residues 344–363 (RTSSKVTHVQEHPTSVNVGS) are compositionally biased toward polar residues.

Interacts with E3 ligase UBE2J1. Auto-ubiquitinated.

It localises to the endoplasmic reticulum membrane. It catalyses the reaction S-ubiquitinyl-[E2 ubiquitin-conjugating enzyme]-L-cysteine + [acceptor protein]-L-lysine = [E2 ubiquitin-conjugating enzyme]-L-cysteine + N(6)-ubiquitinyl-[acceptor protein]-L-lysine.. It participates in protein modification; protein ubiquitination. In terms of biological role, has E3 ubiquitin-protein ligase activity. Plays a role in male fecundity through the interaction with the E2 ubituitin-protein ligase UBE2J1. This Rattus norvegicus (Rat) protein is E3 ubiquitin-protein ligase RNF133 (Rnf133).